We begin with the raw amino-acid sequence, 380 residues long: DNA primase small subunit PriS (380 aa).

Residues Asp-101, Asp-103, and Asp-282 contribute to the active site.

It belongs to the eukaryotic-type primase small subunit family. As to quaternary structure, heterodimer of a small subunit (PriS) and a large subunit (PriL). It depends on Mg(2+) as a cofactor. Requires Mn(2+) as cofactor.

In terms of biological role, catalytic subunit of DNA primase, an RNA polymerase that catalyzes the synthesis of short RNA molecules used as primers for DNA polymerase during DNA replication. The small subunit contains the primase catalytic core and has DNA synthesis activity on its own. Binding to the large subunit stabilizes and modulates the activity, increasing the rate of DNA synthesis while decreasing the length of the DNA fragments, and conferring RNA synthesis capability. The DNA polymerase activity may enable DNA primase to also catalyze primer extension after primer synthesis. May also play a role in DNA repair. The protein is DNA primase small subunit PriS of Hyperthermus butylicus (strain DSM 5456 / JCM 9403 / PLM1-5).